A 154-amino-acid polypeptide reads, in one-letter code: D-aminoacyl-tRNA deacylase (154 aa).

Positions Gly142 to Pro143 match the Gly-cisPro motif, important for rejection of L-amino acids motif.

The protein belongs to the DTD family. Homodimer.

It localises to the cytoplasm. It catalyses the reaction glycyl-tRNA(Ala) + H2O = tRNA(Ala) + glycine + H(+). It carries out the reaction a D-aminoacyl-tRNA + H2O = a tRNA + a D-alpha-amino acid + H(+). In terms of biological role, an aminoacyl-tRNA editing enzyme that deacylates mischarged D-aminoacyl-tRNAs. Also deacylates mischarged glycyl-tRNA(Ala), protecting cells against glycine mischarging by AlaRS. Acts via tRNA-based rather than protein-based catalysis; rejects L-amino acids rather than detecting D-amino acids in the active site. By recycling D-aminoacyl-tRNA to D-amino acids and free tRNA molecules, this enzyme counteracts the toxicity associated with the formation of D-aminoacyl-tRNA entities in vivo and helps enforce protein L-homochirality. The chain is D-aminoacyl-tRNA deacylase from Polaromonas sp. (strain JS666 / ATCC BAA-500).